A 114-amino-acid chain; its full sequence is Fumarate reductase subunit D (114 aa).

3 consecutive transmembrane segments (helical) span residues 27 to 47, 50 to 70, and 94 to 114; these read ICFP…LVPV, IVAF…TIFP, and WVFY…VIAL.

The protein belongs to the FrdD family. Part of an enzyme complex containing four subunits: a flavoprotein (FrdA), an iron-sulfur protein (FrdB), and two hydrophobic anchor proteins (FrdC and FrdD).

It is found in the cell inner membrane. Its function is as follows. Anchors the catalytic components of the fumarate reductase complex to the cell membrane, binds quinones. The protein is Fumarate reductase subunit D of Actinobacillus pleuropneumoniae serotype 3 (strain JL03).